The sequence spans 771 residues: Tubulin monoglycylase TTLL3 (771 aa).

Residues 70 to 106 (PRPSFSQPRRHDHETETTDEGDSSDEDDLGEEVERDD) form a disordered region. A compositionally biased stretch (acidic residues) spans 86–106 (TTDEGDSSDEDDLGEEVERDD). The TTL domain maps to 220 to 566 (EGEKMGEVHN…RRSERNTDTG (347 aa)). Residues Lys-339, 345–346 (RG), 377–380 (QKYI), 390–392 (KFD), and 434–435 (CN) each bind ATP. Arg-345 lines the a protein pocket. Ser-437 serves as a coordination point for L-glutamate. The Mg(2+) site is built by Asp-512, Glu-525, and Asn-527. Residue Glu-525 participates in ATP binding. Disordered stretches follow at residues 605–640 (LIQS…EEVK) and 682–713 (TELH…PTLY). The span at 614-633 (SKSTNHKSSLLSSPCTSGKE) shows a compositional bias: polar residues.

It depends on Mg(2+) as a cofactor.

Its subcellular location is the cytoplasm. The protein localises to the cytoskeleton. It is found in the cell projection. It localises to the cilium. The protein resides in the cilium axoneme. Its subcellular location is the flagellum axoneme. The enzyme catalyses L-glutamyl-[protein] + glycine + ATP = glycyl-L-glutamyl-[protein] + ADP + phosphate + H(+). In terms of biological role, monoglycylase which modifies alpha- and beta-tubulin, adding a single glycine on the gamma-carboxyl groups of specific glutamate residues to generate monoglycine side chains within the C-terminal tail of tubulin. Not involved in elongation step of the polyglycylation reaction. Preferentially glycylates a beta-tail peptide over the alpha-tail, although shifts its preference toward alpha-tail as beta-tail glutamylation increases. Competes with polyglutamylases for modification site on beta-tubulin substrate, thereby creating an anticorrelation between glycylation and glutamylation reactions. Not involved in elongation step of the polyglycylation reaction. The protein is Tubulin monoglycylase TTLL3 (ttll3) of Danio rerio (Zebrafish).